The sequence spans 1158 residues: ATP-dependent helicase/deoxyribonuclease subunit B (1158 aa).

Residues 1–275 form the UvrD-like helicase ATP-binding domain; sequence MTLHAYLGRA…QYFNQLYRFN (275 aa). 8–15 lines the ATP pocket; sequence GRAGTGKS. One can recognise a UvrD-like helicase C-terminal domain in the interval 269–583; the sequence is NQLYRFNNQD…SIGTMDLAKV (315 aa). 4 residues coordinate [4Fe-4S] cluster: C784, C1112, C1115, and C1121.

Belongs to the helicase family. AddB/RexB type 1 subfamily. In terms of assembly, heterodimer of AddA and AddB. Mg(2+) is required as a cofactor. It depends on [4Fe-4S] cluster as a cofactor.

In terms of biological role, the heterodimer acts as both an ATP-dependent DNA helicase and an ATP-dependent, dual-direction single-stranded exonuclease. Recognizes the chi site generating a DNA molecule suitable for the initiation of homologous recombination. The AddB subunit has 5' -&gt; 3' nuclease activity but not helicase activity. The polypeptide is ATP-dependent helicase/deoxyribonuclease subunit B (Staphylococcus aureus (strain USA300)).